We begin with the raw amino-acid sequence, 297 residues long: 4-hydroxy-tetrahydrodipicolinate synthase (297 aa).

Threonine 47 contributes to the pyruvate binding site. Residue tyrosine 136 is the Proton donor/acceptor of the active site. Lysine 165 serves as the catalytic Schiff-base intermediate with substrate. Threonine 206 is a binding site for pyruvate.

It belongs to the DapA family. As to quaternary structure, homotetramer; dimer of dimers.

It localises to the cytoplasm. It catalyses the reaction L-aspartate 4-semialdehyde + pyruvate = (2S,4S)-4-hydroxy-2,3,4,5-tetrahydrodipicolinate + H2O + H(+). It participates in amino-acid biosynthesis; L-lysine biosynthesis via DAP pathway; (S)-tetrahydrodipicolinate from L-aspartate: step 3/4. Its function is as follows. Catalyzes the condensation of (S)-aspartate-beta-semialdehyde [(S)-ASA] and pyruvate to 4-hydroxy-tetrahydrodipicolinate (HTPA). The protein is 4-hydroxy-tetrahydrodipicolinate synthase of Sulfurovum sp. (strain NBC37-1).